We begin with the raw amino-acid sequence, 620 residues long: Chaperone protein HscA homolog (620 aa).

The protein belongs to the heat shock protein 70 family.

Functionally, chaperone involved in the maturation of iron-sulfur cluster-containing proteins. Has a low intrinsic ATPase activity which is markedly stimulated by HscB. This Neisseria meningitidis serogroup A / serotype 4A (strain DSM 15465 / Z2491) protein is Chaperone protein HscA homolog.